The following is a 90-amino-acid chain: MIRLDKEYSGRRLLDIDHPESPFGTKESPAVVQSYFDKRNIGCRGGEGEDGHDVVWFWLDKGKSFECPVCSQYFEHGPPDGHGDDEDHHH.

Positions 43, 67, and 70 each coordinate Zn(2+).

It belongs to the cytochrome c oxidase subunit 5B (TC 3.D.4.11) family.

This Arabidopsis thaliana (Mouse-ear cress) protein is Putative cytochrome c oxidase subunit 5b-like.